We begin with the raw amino-acid sequence, 145 residues long: D-aminoacyl-tRNA deacylase (145 aa).

Positions 137 to 138 (GP) match the Gly-cisPro motif, important for rejection of L-amino acids motif.

The protein belongs to the DTD family. In terms of assembly, homodimer.

It localises to the cytoplasm. The enzyme catalyses glycyl-tRNA(Ala) + H2O = tRNA(Ala) + glycine + H(+). It carries out the reaction a D-aminoacyl-tRNA + H2O = a tRNA + a D-alpha-amino acid + H(+). In terms of biological role, an aminoacyl-tRNA editing enzyme that deacylates mischarged D-aminoacyl-tRNAs. Also deacylates mischarged glycyl-tRNA(Ala), protecting cells against glycine mischarging by AlaRS. Acts via tRNA-based rather than protein-based catalysis; rejects L-amino acids rather than detecting D-amino acids in the active site. By recycling D-aminoacyl-tRNA to D-amino acids and free tRNA molecules, this enzyme counteracts the toxicity associated with the formation of D-aminoacyl-tRNA entities in vivo and helps enforce protein L-homochirality. In Rhodococcus opacus (strain B4), this protein is D-aminoacyl-tRNA deacylase.